We begin with the raw amino-acid sequence, 518 residues long: Serine--tRNA ligase, mitochondrial (518 aa).

Residues 1 to 34 constitute a mitochondrion transit peptide; sequence MAASMARLWWPFLARQGLRSRGRCVCSQNPRRSF. N6-acetyllysine is present on Lys-110. The residue at position 195 (Lys-195) is an N6-succinyllysine. An L-serine-binding site is contributed by 299–301; sequence TAE. 330–332 is a binding site for ATP; sequence RAE. Lys-337 carries the N6-succinyllysine modification. An ATP-binding site is contributed by Val-345. An L-serine-binding site is contributed by Glu-352. 418-421 contacts ATP; the sequence is EVTS. Thr-453 is a binding site for L-serine. Residues 497–518 form a disordered region; sequence PLQYIGPNQPQKPRLPGQSATR.

Belongs to the class-II aminoacyl-tRNA synthetase family. Type-1 seryl-tRNA synthetase subfamily. As to quaternary structure, homodimer. The tRNA molecule probably binds across the dimer. In terms of tissue distribution, ubiquitous.

Its subcellular location is the mitochondrion matrix. The enzyme catalyses tRNA(Ser) + L-serine + ATP = L-seryl-tRNA(Ser) + AMP + diphosphate + H(+). It carries out the reaction tRNA(Sec) + L-serine + ATP = L-seryl-tRNA(Sec) + AMP + diphosphate + H(+). It participates in aminoacyl-tRNA biosynthesis; selenocysteinyl-tRNA(Sec) biosynthesis; L-seryl-tRNA(Sec) from L-serine and tRNA(Sec): step 1/1. Its function is as follows. Catalyzes the attachment of serine to tRNA(Ser). Is also probably able to aminoacylate tRNA(Sec) with serine, to form the misacylated tRNA L-seryl-tRNA(Sec), which will be further converted into selenocysteinyl-tRNA(Sec). The polypeptide is Serine--tRNA ligase, mitochondrial (Sars2) (Mus musculus (Mouse)).